The primary structure comprises 175 residues: MSETDSTDFHEMREPRIEKVVVHMGVGQGGVELQNAETILEAITGQQTVRTKAKSPEPEFGLRQGDPIGAKVTLRDDTAVDFLERALPAADLDRRQFDNTGNVSFGIEEHTDFPSQEYDPNIGIYGMDVTVNLTRPGYRVAKRDQGTRQIPSNHRLNSEDAVSFLVSNFDVEVNE.

It belongs to the universal ribosomal protein uL5 family. As to quaternary structure, part of the 50S ribosomal subunit; contacts the 5S rRNA and probably tRNA. Forms a bridge to the 30S subunit in the 70S ribosome.

Functionally, this is one of the proteins that bind and probably mediate the attachment of the 5S RNA into the large ribosomal subunit, where it forms part of the central protuberance. In the 70S ribosome it contacts protein S13 of the 30S subunit (bridge B1b), connecting the 2 subunits; this bridge is implicated in subunit movement. May contact the P site tRNA; the 5S rRNA and some of its associated proteins might help stabilize positioning of ribosome-bound tRNAs. This chain is Large ribosomal subunit protein uL5, found in Halobacterium salinarum (strain ATCC 29341 / DSM 671 / R1).